The primary structure comprises 702 residues: Cell adhesion molecule CEACAM5 (702 aa).

The first 34 residues, 1 to 34 (MESPSAPPHRWCIPWQRLLLTASLLTFWNPPTTA), serve as a signal peptide directing secretion. The Ig-like V-type domain occupies 35–144 (KLTIESTPFN…TGQFRVYPEL (110 aa)). N-linked (GlcNAc...) asparagine glycans are attached at residues asparagine 104, asparagine 115, asparagine 152, asparagine 182, asparagine 197, asparagine 204, asparagine 208, asparagine 246, asparagine 256, asparagine 274, asparagine 288, asparagine 292, asparagine 309, asparagine 330, asparagine 351, asparagine 360, asparagine 375, asparagine 432, asparagine 466, asparagine 480, asparagine 508, asparagine 529, asparagine 553, asparagine 560, asparagine 580, asparagine 612, asparagine 650, and asparagine 665. Ig-like C2-type domains follow at residues 145–232 (PKPS…VILN), 240–315 (PTIS…TVTT), 323–410 (PKPF…VILN), 418–495 (PTIS…KTIT), 501–588 (PKPS…VTLD), and 593–675 (PDTP…ITVS). A disulfide bond links cysteine 167 and cysteine 215. A disulfide bridge links cysteine 259 with cysteine 299. Cysteine 345 and cysteine 393 form a disulfide bridge. Cysteine 437 and cysteine 477 are oxidised to a cystine. Cysteine 523 and cysteine 571 are disulfide-bonded. Cysteine 615 and cysteine 655 are oxidised to a cystine. The GPI-anchor amidated alanine moiety is linked to residue alanine 685. Residues 686–702 (GATVGIMIGVLVGVALI) constitute a propeptide, removed in mature form.

It belongs to the immunoglobulin superfamily. CEA family. As to quaternary structure, homodimer. Complex immunoreactive glycoprotein with a MW of 180 kDa comprising 60% carbohydrate. Expressed in columnar epithelial and goblet cells of the colon (at protein level). Found in adenocarcinomas of endodermally derived digestive system epithelium and fetal colon.

It localises to the cell membrane. Its subcellular location is the apical cell membrane. It is found in the cell surface. Cell surface glycoprotein that plays a role in cell adhesion, intracellular signaling and tumor progression. Mediates homophilic and heterophilic cell adhesion with other carcinoembryonic antigen-related cell adhesion molecules, such as CEACAM6. Plays a role as an oncogene by promoting tumor progression; induces resistance to anoikis of colorectal carcinoma cells. In terms of biological role, (Microbial infection) Receptor for E.coli Dr adhesins. Binding of E.coli Dr adhesins leads to dissociation of the homodimer. This is Cell adhesion molecule CEACAM5 from Homo sapiens (Human).